Here is a 286-residue protein sequence, read N- to C-terminus: B3 domain-containing protein REM11 (286 aa).

The TF-B3 1 DNA-binding region spans 1-70; it reads MAWNLAIITL…TPMLSLVSTQ (70 aa). The disordered stretch occupies residues 68 to 114; that stretch reads STQSTSHKSQKRECSKHSEKESISAVPSKGKKNRKARSNREERRDSS. A compositionally biased stretch (basic and acidic residues) spans 78–89; sequence KRECSKHSEKES. The TF-B3 2 DNA-binding region spans 119 to 219; sequence NRFVTFTPED…RAQVCFYGVF (101 aa).

The protein resides in the nucleus. The protein is B3 domain-containing protein REM11 (REM11) of Arabidopsis thaliana (Mouse-ear cress).